The primary structure comprises 228 residues: Transcription factor zip-11 (228 aa).

The segment at 166–202 (RKRQQNKVAAARYRDKQKAKWQDLLDQLEAEEDRNQR) is basic motif. Positions 166-224 (RKRQQNKVAAARYRDKQKAKWQDLLDQLEAEEDRNQRLKLQAGHLEKEVAEMRQAFLAK) constitute a bZIP domain. Positions 203–210 (LKLQAGHL) are leucine-zipper.

This sequence belongs to the bZIP family. In terms of assembly, interacts with CCAAT/enhancer-binding protein cebp-2.

It is found in the nucleus. Its function is as follows. Transcription factor. Involved in modulating innate immune response pathways, acting to promote resistance against infection by Gram-negative bacterium P.aeruginosa strain PA14. May act as part of a feedback regulatory loop with the pmk-1/p38 MAPK pathway. May also function in concert with CCAAT/enhancer-binding protein cebp-2 to mediate immune responses, independently of the pmk-1/p38 MAPK pathway. In Caenorhabditis elegans, this protein is Transcription factor zip-11.